Reading from the N-terminus, the 321-residue chain is Phospho-N-acetylmuramoyl-pentapeptide-transferase (321 aa).

10 helical membrane-spanning segments follow: residues 1–21, 50–70, 76–96, 112–132, 140–160, 176–196, 200–220, 225–245, 250–270, and 300–320; these read MLFILAVIALLITFILVPILI, MGGLTFLISIIITSIIAIFFV, IILLLFVTIGFGLIGFIDDYI, FLAQIAIAVVFFLLSDVFHLV, IPFTNISIPLSFAYVIFIVFW, GLATGLSIIGFTMYAIMSFVL, AIGAFCIIMIFALLGFLPYNL, VFMGDTGSLALGGIFATISIM, LSLLLIGLVFVIETASVMLQV, and VVTVFWTAGLISGLIGLWIGV.

It belongs to the glycosyltransferase 4 family. MraY subfamily. Requires Mg(2+) as cofactor.

It is found in the cell membrane. The catalysed reaction is UDP-N-acetyl-alpha-D-muramoyl-L-alanyl-gamma-D-glutamyl-L-lysyl-D-alanyl-D-alanine + di-trans,octa-cis-undecaprenyl phosphate = Mur2Ac(oyl-L-Ala-gamma-D-Glu-L-Lys-D-Ala-D-Ala)-di-trans,octa-cis-undecaprenyl diphosphate + UMP. The protein operates within cell wall biogenesis; peptidoglycan biosynthesis. In terms of biological role, catalyzes the initial step of the lipid cycle reactions in the biosynthesis of the cell wall peptidoglycan: transfers peptidoglycan precursor phospho-MurNAc-pentapeptide from UDP-MurNAc-pentapeptide onto the lipid carrier undecaprenyl phosphate, yielding undecaprenyl-pyrophosphoryl-MurNAc-pentapeptide, known as lipid I. The sequence is that of Phospho-N-acetylmuramoyl-pentapeptide-transferase from Staphylococcus haemolyticus (strain JCSC1435).